The primary structure comprises 197 residues: Prefoldin subunit 3 (197 aa).

The disordered stretch occupies residues 1–26 (MASLALRGSSENPAPTKDTTTNPRGI). Polar residues predominate over residues 9–23 (SSENPAPTKDTTTNP).

Belongs to the prefoldin subunit alpha family. In terms of assembly, heterohexamer of two PFD-alpha type and four PFD-beta type subunits.

In terms of biological role, prefoldin subunit; part of the gene cluster that mediates the biosynthesis of elsinochromes, pigments consisting of at least four interconvertible tautomers (A, B, C and D) that have a core phenolic quinone to which various side chains are attached and which play an important role in fungal pathogenesis. The non-reducing polyketide synthase PKS1 was proposed to iteratively catalyze decarboxylation between acetyl-CoA and malonyl-CoA subunits for polyketide chain elongation. The released polyketide undergoes cyclization to form an aromatic ring, and proceeds via serial modification steps to produce the heptaketide back- bone of elsinochrome. As elsinochrome has a symmetrical structure, two identical heptaketides are fused to form a core 1,2-dihydrobenzo-perylene ring structure, which can then be successively modified to produce the various derivatives of elsinochrome. Some of these reactions may be cooperatively carried out, at least in part, by the products of RDT1, OXR1 and PKS1. PRF1, embedded within the elsinochrome cluster possibly functions to stabilize some of the biosynthetic enzymes required for elsinochrome production. As prefoldin is a hexamer containing 2 a and 4 b subunits, additional prefoldin subunits, whose coding genes may not immediately link to the elsinochrome biosynthetic gene cluster, are required to fulfill the chaperone function. In addition, no methyltransferase-coding gene exists within the biosynthetic gene cluster, even though elsinochrome has four methyl groups at positions C3, C7, C8 and C12. Apparently, the identified gene cluster does not contain the entire entourage of genes responsible for elsinochrome biosynthesis. Once elsinochrome is synthesized, it must be exported outside the fungal cells, which is probably accomplished by the ECT1 transporter, to avoid toxicity. This chain is Prefoldin subunit 3, found in Elsinoe fawcettii (Citrus scab fungus).